The primary structure comprises 233 residues: Gamma-glutamyl-hercynylcysteine sulfoxide hydrolase (233 aa).

Cysteine 2 functions as the Nucleophile in the catalytic mechanism. Residues 2–233 (CRHLGWLGAQ…TALDRAKGPR (232 aa)) enclose the Glutamine amidotransferase type-2 domain.

It carries out the reaction gamma-L-glutamyl-hercynylcysteine S-oxide + H2O = S-(hercyn-2-yl)-L-cysteine S-oxide + L-glutamate. It functions in the pathway amino-acid biosynthesis; ergothioneine biosynthesis. Functionally, catalyzes the hydrolysis of the gamma-glutamyl amide bond of hercynyl-gamma-L-glutamyl-L-cysteine sulfoxide to produce hercynylcysteine sulfoxide, a step in the biosynthesis pathway of ergothioneine. ERG is one of the major redox buffers which protects bacteria against redox stressors and antibiotics; loss of ERG or mycothiol (MSH, the other major redox buffer in this bacteria) leads to respiratory alterations and bioenergetic deficiencies that negatively impact virulence. This Mycobacterium tuberculosis (strain CDC 1551 / Oshkosh) protein is Gamma-glutamyl-hercynylcysteine sulfoxide hydrolase.